Consider the following 340-residue polypeptide: 4-amino-5-hydroxymethyl-2-methylpyrimidine phosphate synthase THI12 (340 aa).

Lysine 62 carries the N6-(pyridoxal phosphate)lysine modification. Histidine 66 is an active-site residue. 115 to 118 provides a ligand contact to pyridoxal 5'-phosphate; sequence GEFG. A CCCFC; essential for catalytic activity, may be the site of iron coordination motif is present at residues 195–199; that stretch reads CCCFC.

The protein belongs to the NMT1/THI5 family. Homodimer. Fe cation serves as cofactor.

The catalysed reaction is N(6)-(pyridoxal phosphate)-L-lysyl-[4-amino-5-hydroxymethyl-2-methylpyrimidine phosphate synthase] + L-histidyl-[4-amino-5-hydroxymethyl-2-methylpyrimidine phosphate synthase] + 2 Fe(3+) + 4 H2O = L-lysyl-[4-amino-5-hydroxymethyl-2-methylpyrimidine phosphate synthase] + (2S)-2-amino-5-hydroxy-4-oxopentanoyl-[4-amino-5-hydroxymethyl-2-methylpyrimidine phosphate synthase] + 4-amino-2-methyl-5-(phosphooxymethyl)pyrimidine + 3-oxopropanoate + 2 Fe(2+) + 2 H(+). Its pathway is cofactor biosynthesis; thiamine diphosphate biosynthesis. In terms of biological role, responsible for the formation of the pyrimidine heterocycle in the thiamine biosynthesis pathway. Catalyzes the formation of hydroxymethylpyrimidine phosphate (HMP-P) from histidine and pyridoxal phosphate (PLP). The protein uses PLP and the active site histidine to form HMP-P, generating an inactive enzyme. The enzyme can only undergo a single turnover, which suggests it is a suicide enzyme. The chain is 4-amino-5-hydroxymethyl-2-methylpyrimidine phosphate synthase THI12 from Saccharomyces cerevisiae (strain ATCC 204508 / S288c) (Baker's yeast).